Here is a 62-residue protein sequence, read N- to C-terminus: Large ribosomal subunit protein bL33 (62 aa).

The protein belongs to the bacterial ribosomal protein bL33 family.

This Bacteroides fragilis (strain ATCC 25285 / DSM 2151 / CCUG 4856 / JCM 11019 / LMG 10263 / NCTC 9343 / Onslow / VPI 2553 / EN-2) protein is Large ribosomal subunit protein bL33.